Reading from the N-terminus, the 376-residue chain is Chaperone protein DnaJ (376 aa).

One can recognise a J domain in the interval 5 to 70 (DYYEVLGVGR…DKKAAYDQFG (66 aa)). Residues 132 to 210 (GLTKELKVPT…CHGNGRVEKT (79 aa)) form a CR-type zinc finger. The Zn(2+) site is built by Cys-145, Cys-148, Cys-162, Cys-165, Cys-184, Cys-187, Cys-198, and Cys-201. CXXCXGXG motif repeat units lie at residues 145-152 (CDSCDGSG), 162-169 (CGTCHGMG), 184-191 (CPTCHGRG), and 198-205 (CSKCHGNG).

Belongs to the DnaJ family. In terms of assembly, homodimer. The cofactor is Zn(2+).

It localises to the cytoplasm. Participates actively in the response to hyperosmotic and heat shock by preventing the aggregation of stress-denatured proteins and by disaggregating proteins, also in an autonomous, DnaK-independent fashion. Unfolded proteins bind initially to DnaJ; upon interaction with the DnaJ-bound protein, DnaK hydrolyzes its bound ATP, resulting in the formation of a stable complex. GrpE releases ADP from DnaK; ATP binding to DnaK triggers the release of the substrate protein, thus completing the reaction cycle. Several rounds of ATP-dependent interactions between DnaJ, DnaK and GrpE are required for fully efficient folding. Also involved, together with DnaK and GrpE, in the DNA replication of plasmids through activation of initiation proteins. The protein is Chaperone protein DnaJ of Shewanella amazonensis (strain ATCC BAA-1098 / SB2B).